The following is a 662-amino-acid chain: MINHITDNQFKLVSKYQPSGDQPQAIEQLVDNIEGGEKAQILMGATGTGKTYTMSQVISKVNKPTLVIAHNKTLAGQLYGEFKEFFPENAVEYFVSYYDYYQPEAYVPSSDTYIEKDSSVNDEIDKLRHSATSALLERNDVIVVASVSCIYGLGSPKEYADSVVSLRPGLEISRDKLLNDLVDIQFERNDIDFQRGRFRVRGDVVEIFPASRDEHAFRVEFFGDEIDRIREVEALTGQVLGEVDHLAIFPATHFVTNDDHMEVAVAKIQAELEEQLAVFEKEGKLLEAQRLKQRTEYDIEMLREMGYTNGVENYSRHMDGRSEGEPPYTLLDFFPDDFLIMIDESHMTIGQIKGMYNGDRSRKEMLVNYGFRLPSALDNRPLRREEFESHVHQIVYVSATPGDYENEQTETVIEQIIRPTGLLDPEVEVRPTMGQIDDLLGEINARVEKNERTFITTLTKKMAEDLTDYFKEMGIKVKYMHSDIKTLERTEIIRDLRLGVFDVLVGINLLREGIDVPEVSLVAILDADKEGFLRNERGLIQTIGRAARNSEGHVIMYADTVTQSMQRAIDETARRRKIQMAYNEEHGIVPQTIKKEIRDLIAVTKAVAKEEDKEVDINSLNKQERKELVKKLEKQMQEAVEVLDFELAAQIRDMMLEVKALD.

In terms of domain architecture, Helicase ATP-binding spans 31-188 (DNIEGGEKAQ…NDLVDIQFER (158 aa)). 44–51 (GATGTGKT) lines the ATP pocket. The Beta-hairpin signature appears at 97–120 (YYDYYQPEAYVPSSDTYIEKDSSV). Residues 435–601 (QIDDLLGEIN…TIKKEIRDLI (167 aa)) form the Helicase C-terminal domain. One can recognise a UVR domain in the interval 626–661 (KELVKKLEKQMQEAVEVLDFELAAQIRDMMLEVKAL).

The protein belongs to the UvrB family. As to quaternary structure, forms a heterotetramer with UvrA during the search for lesions. Interacts with UvrC in an incision complex.

The protein localises to the cytoplasm. In terms of biological role, the UvrABC repair system catalyzes the recognition and processing of DNA lesions. A damage recognition complex composed of 2 UvrA and 2 UvrB subunits scans DNA for abnormalities. Upon binding of the UvrA(2)B(2) complex to a putative damaged site, the DNA wraps around one UvrB monomer. DNA wrap is dependent on ATP binding by UvrB and probably causes local melting of the DNA helix, facilitating insertion of UvrB beta-hairpin between the DNA strands. Then UvrB probes one DNA strand for the presence of a lesion. If a lesion is found the UvrA subunits dissociate and the UvrB-DNA preincision complex is formed. This complex is subsequently bound by UvrC and the second UvrB is released. If no lesion is found, the DNA wraps around the other UvrB subunit that will check the other stand for damage. The chain is UvrABC system protein B from Streptococcus pneumoniae (strain P1031).